The sequence spans 220 residues: Ribose-5-phosphate isomerase A (220 aa).

Substrate is bound by residues 29 to 32, 82 to 85, and 95 to 98; these read TGST, DGCD, and KGGG. Glutamate 104 serves as the catalytic Proton acceptor. Lysine 122 lines the substrate pocket.

The protein belongs to the ribose 5-phosphate isomerase family. As to quaternary structure, homodimer.

It carries out the reaction aldehydo-D-ribose 5-phosphate = D-ribulose 5-phosphate. Its pathway is carbohydrate degradation; pentose phosphate pathway; D-ribose 5-phosphate from D-ribulose 5-phosphate (non-oxidative stage): step 1/1. Catalyzes the reversible conversion of ribose-5-phosphate to ribulose 5-phosphate. The protein is Ribose-5-phosphate isomerase A of Laribacter hongkongensis (strain HLHK9).